Reading from the N-terminus, the 397-residue chain is MATTLTTDLRLSIAHQTRFGLRLASAISSDPESAATNVAFSPVSLHVALSLVAAGARGATRDQLVAVLGGGGAGEAEALQSLAEQVVQFVLADASINSGPRIAFANGVFVDASLSLKPSFQELAVCNYKSEVQSVDFKTKAPEAASQVNSWVKNVTAGLIEEILPAGSIDNTTRLVLGNALYFKGLWTKKFDESKTKYDDFHLLNGSTVQTPFMSSTNKQYLSSSDGLKVLKLPYQHGGDNRQFSMYILLPEAHDGLSRLAQKLSTEPDFLENRIPTEEVEVGQFMLPKFKISFGFEANKLLKTLGLQLPFSLEANLSEMVNSPMGLYISSVFHKTFVEVDEEGTKAGAATGDVIVDRSLPIRMDFVANHPFLFLIREDIAGVVLFIGHVANPAVSS.

N-acetylalanine is present on A2. The tract at residues 344–368 (GTKAGAATGDVIVDRSLPIRMDFVA) is RCL.

It belongs to the serpin family. In terms of tissue distribution, highly expressed in endosperm, at intermediate level in embryo and at lower levels in roots.

Inhibits chymotrypsin in vitro. The protein is Serpin-Z7 (PAZ7) of Hordeum vulgare (Barley).